The primary structure comprises 190 residues: Putative 3-methyladenine DNA glycosylase (190 aa).

This sequence belongs to the DNA glycosylase MPG family.

This is Putative 3-methyladenine DNA glycosylase from Rubrobacter xylanophilus (strain DSM 9941 / JCM 11954 / NBRC 16129 / PRD-1).